The chain runs to 220 residues: 7-cyano-7-deazaguanine synthase (220 aa).

An ATP-binding site is contributed by 7–17 (ISGGMDSSTAA). Residues Cys-187, Cys-195, Cys-198, and Cys-201 each coordinate Zn(2+).

This sequence belongs to the QueC family. Requires Zn(2+) as cofactor.

The catalysed reaction is 7-carboxy-7-deazaguanine + NH4(+) + ATP = 7-cyano-7-deazaguanine + ADP + phosphate + H2O + H(+). Its pathway is purine metabolism; 7-cyano-7-deazaguanine biosynthesis. Its function is as follows. Catalyzes the ATP-dependent conversion of 7-carboxy-7-deazaguanine (CDG) to 7-cyano-7-deazaguanine (preQ(0)). The chain is 7-cyano-7-deazaguanine synthase from Campylobacter hominis (strain ATCC BAA-381 / DSM 21671 / CCUG 45161 / LMG 19568 / NCTC 13146 / CH001A).